The sequence spans 222 residues: UPF0758 protein YicR (222 aa).

The MPN domain maps to Pro100 to Ile222. The Zn(2+) site is built by His171, His173, and Asp184. Residues His171 to Asp184 carry the JAMM motif motif.

The protein belongs to the UPF0758 family. YicR subfamily.

This is UPF0758 protein YicR from Shigella boydii serotype 18 (strain CDC 3083-94 / BS512).